The sequence spans 519 residues: Glucoamylase GLA1 (519 aa).

The signal sequence occupies residues 1–27 (MRFGVLISVFVAIVSALPLQEGPLNKR). N-linked (GlcNAc...) asparagine glycans are attached at residues N115 and N127. W166 contacts substrate. N205 carries an N-linked (GlcNAc...) asparagine glycan. Residue D234 is the Proton acceptor of the active site. The Proton donor role is filled by E237.

The protein belongs to the glycosyl hydrolase 15 family.

The catalysed reaction is Hydrolysis of terminal (1-&gt;4)-linked alpha-D-glucose residues successively from non-reducing ends of the chains with release of beta-D-glucose.. The polypeptide is Glucoamylase GLA1 (GLA1) (Saccharomycopsis fibuligera (Yeast)).